The following is a 520-amino-acid chain: CUGBP Elav-like family member 4 (520 aa).

RRM domains are found at residues 47-128, 135-215, and 435-513; these read IKLF…PADS, RKLF…FADT, and CNLF…LKRP.

The protein belongs to the CELF/BRUNOL family.

The protein resides in the nucleus. Its subcellular location is the cytoplasm. Its function is as follows. RNA-binding protein that may be implicated in the regulation of pre-mRNA alternative splicing. This Danio rerio (Zebrafish) protein is CUGBP Elav-like family member 4 (celf4).